The chain runs to 133 residues: Putative nickel-responsive regulator (133 aa).

His74, His85, His87, and Cys93 together coordinate Ni(2+).

This sequence belongs to the transcriptional regulatory CopG/NikR family. The cofactor is Ni(2+).

In terms of biological role, transcriptional regulator. The polypeptide is Putative nickel-responsive regulator (Saccharolobus islandicus (strain Y.N.15.51 / Yellowstone #2) (Sulfolobus islandicus)).